Reading from the N-terminus, the 307-residue chain is Protein YIF1A (307 aa).

Positions Met-1 to Tyr-42 are disordered. Over Met-1–Asp-148 the chain is Cytoplasmic. The helical transmembrane segment at Leu-149–Ile-169 threads the bilayer. The Lumenal portion of the chain corresponds to Gln-170–Thr-184. A helical membrane pass occupies residues Ala-185 to Val-205. At His-206–Asp-213 the chain is on the cytoplasmic side. The helical transmembrane segment at Leu-214–Gly-236 threads the bilayer. Topologically, residues Ser-237 to Gly-239 are lumenal. A helical transmembrane segment spans residues Tyr-240–Leu-259. At Lys-260–Tyr-285 the chain is on the cytoplasmic side. A helical transmembrane segment spans residues Ile-286 to Val-306.

The protein belongs to the YIF1 family.

The protein localises to the endoplasmic reticulum membrane. It localises to the golgi apparatus membrane. The protein resides in the endoplasmic reticulum-Golgi intermediate compartment membrane. Its function is as follows. Possible role in transport between endoplasmic reticulum and Golgi. The chain is Protein YIF1A (yif1a) from Danio rerio (Zebrafish).